Reading from the N-terminus, the 232-residue chain is 7-cyano-7-deazaguanine synthase (232 aa).

7–17 (LSGGLDSTVVT) contacts ATP. Residues Cys195, Cys206, Cys209, and Cys212 each coordinate Zn(2+).

The protein belongs to the QueC family. It depends on Zn(2+) as a cofactor.

It catalyses the reaction 7-carboxy-7-deazaguanine + NH4(+) + ATP = 7-cyano-7-deazaguanine + ADP + phosphate + H2O + H(+). It participates in purine metabolism; 7-cyano-7-deazaguanine biosynthesis. In terms of biological role, catalyzes the ATP-dependent conversion of 7-carboxy-7-deazaguanine (CDG) to 7-cyano-7-deazaguanine (preQ(0)). This chain is 7-cyano-7-deazaguanine synthase, found in Methanocaldococcus jannaschii (strain ATCC 43067 / DSM 2661 / JAL-1 / JCM 10045 / NBRC 100440) (Methanococcus jannaschii).